We begin with the raw amino-acid sequence, 150 residues long: Arginine repressor (150 aa).

The protein belongs to the ArgR family.

It is found in the cytoplasm. It functions in the pathway amino-acid biosynthesis; L-arginine biosynthesis [regulation]. Its function is as follows. Regulates arginine biosynthesis genes. The sequence is that of Arginine repressor from Desulfitobacterium hafniense (strain DSM 10664 / DCB-2).